The following is a 331-amino-acid chain: Ketol-acid reductoisomerase (NADP(+)) (331 aa).

Residues 2–182 (IKKYYDADCN…GAGRAGILET (181 aa)) enclose the KARI N-terminal Rossmann domain. Residues 25–28 (YGSQ), Arg48, and Ser51 each bind NADP(+). His108 is an active-site residue. Gly134 contacts NADP(+). The KARI C-terminal knotted domain maps to 183 to 329 (TFREETETDL…AELRKMMSWI (147 aa)). Mg(2+) contacts are provided by Asp191, Glu195, Glu227, and Glu231. Ser252 provides a ligand contact to substrate.

Belongs to the ketol-acid reductoisomerase family. Mg(2+) serves as cofactor.

The enzyme catalyses (2R)-2,3-dihydroxy-3-methylbutanoate + NADP(+) = (2S)-2-acetolactate + NADPH + H(+). It carries out the reaction (2R,3R)-2,3-dihydroxy-3-methylpentanoate + NADP(+) = (S)-2-ethyl-2-hydroxy-3-oxobutanoate + NADPH + H(+). The protein operates within amino-acid biosynthesis; L-isoleucine biosynthesis; L-isoleucine from 2-oxobutanoate: step 2/4. It functions in the pathway amino-acid biosynthesis; L-valine biosynthesis; L-valine from pyruvate: step 2/4. Its function is as follows. Involved in the biosynthesis of branched-chain amino acids (BCAA). Catalyzes an alkyl-migration followed by a ketol-acid reduction of (S)-2-acetolactate (S2AL) to yield (R)-2,3-dihydroxy-isovalerate. In the isomerase reaction, S2AL is rearranged via a Mg-dependent methyl migration to produce 3-hydroxy-3-methyl-2-ketobutyrate (HMKB). In the reductase reaction, this 2-ketoacid undergoes a metal-dependent reduction by NADPH to yield (R)-2,3-dihydroxy-isovalerate. The chain is Ketol-acid reductoisomerase (NADP(+)) from Brachyspira hyodysenteriae (strain ATCC 49526 / WA1).